The primary structure comprises 476 residues: Bifunctional protein HldE (476 aa).

The ribokinase stretch occupies residues 1–319 (MKVSLPAFEK…EALALHHGES (319 aa)). An ATP-binding site is contributed by 195–198 (NMSE). Asp264 is an active-site residue. The cytidylyltransferase stretch occupies residues 345–476 (MTNGCFDILH…AIIQNIMANQ (132 aa)).

The protein in the N-terminal section; belongs to the carbohydrate kinase PfkB family. This sequence in the C-terminal section; belongs to the cytidylyltransferase family. Homodimer.

It carries out the reaction D-glycero-beta-D-manno-heptose 7-phosphate + ATP = D-glycero-beta-D-manno-heptose 1,7-bisphosphate + ADP + H(+). The catalysed reaction is D-glycero-beta-D-manno-heptose 1-phosphate + ATP + H(+) = ADP-D-glycero-beta-D-manno-heptose + diphosphate. It functions in the pathway nucleotide-sugar biosynthesis; ADP-L-glycero-beta-D-manno-heptose biosynthesis; ADP-L-glycero-beta-D-manno-heptose from D-glycero-beta-D-manno-heptose 7-phosphate: step 1/4. The protein operates within nucleotide-sugar biosynthesis; ADP-L-glycero-beta-D-manno-heptose biosynthesis; ADP-L-glycero-beta-D-manno-heptose from D-glycero-beta-D-manno-heptose 7-phosphate: step 3/4. In terms of biological role, catalyzes the phosphorylation of D-glycero-D-manno-heptose 7-phosphate at the C-1 position to selectively form D-glycero-beta-D-manno-heptose-1,7-bisphosphate. Catalyzes the ADP transfer from ATP to D-glycero-beta-D-manno-heptose 1-phosphate, yielding ADP-D-glycero-beta-D-manno-heptose. This chain is Bifunctional protein HldE, found in Shewanella baltica (strain OS185).